Here is a 207-residue protein sequence, read N- to C-terminus: Large ribosomal subunit protein bL25 (207 aa).

Residues 171–207 form a disordered region; it reads ESVVTVEVPEDATESTTAPEAAAAPADAAAAPAADAK. Residues 184-207 show a composition bias toward low complexity; that stretch reads ESTTAPEAAAAPADAAAAPAADAK.

It belongs to the bacterial ribosomal protein bL25 family. CTC subfamily. In terms of assembly, part of the 50S ribosomal subunit; part of the 5S rRNA/L5/L18/L25 subcomplex. Contacts the 5S rRNA. Binds to the 5S rRNA independently of L5 and L18.

In terms of biological role, this is one of the proteins that binds to the 5S RNA in the ribosome where it forms part of the central protuberance. The chain is Large ribosomal subunit protein bL25 from Bifidobacterium longum subsp. infantis (strain ATCC 15697 / DSM 20088 / JCM 1222 / NCTC 11817 / S12).